Consider the following 258-residue polypeptide: 5'-nucleotidase SurE (258 aa).

Residues Asp9, Asp10, Ser42, and Asn95 each contribute to the a divalent metal cation site.

The protein belongs to the SurE nucleotidase family. A divalent metal cation serves as cofactor.

The protein resides in the cytoplasm. The enzyme catalyses a ribonucleoside 5'-phosphate + H2O = a ribonucleoside + phosphate. Nucleotidase that shows phosphatase activity on nucleoside 5'-monophosphates. The sequence is that of 5'-nucleotidase SurE from Campylobacter concisus (strain 13826).